Consider the following 491-residue polypeptide: Probable protein phosphatase 2C 52 (491 aa).

Basic and acidic residues predominate over residues 1 to 11; sequence MVYDGAVKDQE. Residues 1–211 are disordered; it reads MVYDGAVKDQ…REREKERERV (211 aa). The segment covering 12-54 has biased composition (low complexity); sequence SSANPASASAALSEASAAASEVTAAAAAGAGAGAAEEGAAVSG. The span at 66–78 shows a compositional bias: basic residues; it reads GVRHPLKHRRFRA. Residues 95–105 are compositionally biased toward acidic residues; sequence VADEEASEVEQ. Over residues 187 to 211 the composition is skewed to basic and acidic residues; it reads VEEKKHKDQENKHKEREREKERERV. The PPM-type phosphatase domain maps to 229 to 475; that stretch reads SCGYSSFRGK…DNITCIVVKF (247 aa). Mn(2+) is bound by residues aspartate 265, glycine 266, aspartate 427, and aspartate 466.

This sequence belongs to the PP2C family. It depends on Mg(2+) as a cofactor. Mn(2+) serves as cofactor.

It carries out the reaction O-phospho-L-seryl-[protein] + H2O = L-seryl-[protein] + phosphate. The enzyme catalyses O-phospho-L-threonyl-[protein] + H2O = L-threonyl-[protein] + phosphate. This Oryza sativa subsp. japonica (Rice) protein is Probable protein phosphatase 2C 52.